The following is a 1199-amino-acid chain: Major DNA-binding protein (1199 aa).

A disordered region spans residues 289–314 (SGTTTARGARRNDVNSTSKPSPSGGF). A zinc finger spans residues 497–510 (CSLCEKHTRPVCAH). 2 short sequence motifs (required for filament formation) span residues 841-842 (FW) and 1146-1148 (FNF). The interval 1172–1199 (LKRPPEDDELFDLSGIPIKHGNITMEMI) is required for nuclear localization.

It belongs to the herpesviridae major DNA-binding protein family. As to quaternary structure, homooligomers. Forms double-helical filaments necessary for the formation of replication compartments within the host nucleus. Interacts with the origin-binding protein. Interacts with the helicase primase complex; this interaction stimulates primer synthesis activity of the helicase-primase complex. Interacts with the DNA polymerase. Interacts with the alkaline exonuclease; this interaction increases its nuclease processivity.

The protein localises to the host nucleus. Functionally, plays several crucial roles in viral infection. Participates in the opening of the viral DNA origin to initiate replication by interacting with the origin-binding protein. May disrupt loops, hairpins and other secondary structures present on ssDNA to reduce and eliminate pausing of viral DNA polymerase at specific sites during elongation. Promotes viral DNA recombination by performing strand-transfer, characterized by the ability to transfer a DNA strand from a linear duplex to a complementary single-stranded DNA circle. Can also catalyze the renaturation of complementary single strands. Additionally, reorganizes the host cell nucleus, leading to the formation of prereplicative sites and replication compartments. This process is driven by the protein which can form double-helical filaments in the absence of DNA. This Varicella-zoster virus (strain Oka vaccine) (HHV-3) protein is Major DNA-binding protein.